A 776-amino-acid chain; its full sequence is Protein translocase subunit SecA 2 (776 aa).

ATP-binding positions include Q80, 98–102 (GEGKT), and D486.

This sequence belongs to the SecA family. Monomer and homodimer. Part of the essential Sec protein translocation apparatus which comprises SecA, SecYEG and auxiliary proteins SecDF. Other proteins may also be involved.

It is found in the cell membrane. The protein localises to the cytoplasm. The catalysed reaction is ATP + H2O + cellular proteinSide 1 = ADP + phosphate + cellular proteinSide 2.. Functionally, part of the Sec protein translocase complex. Interacts with the SecYEG preprotein conducting channel. Has a central role in coupling the hydrolysis of ATP to the transfer of proteins into and across the cell membrane, serving as an ATP-driven molecular motor driving the stepwise translocation of polypeptide chains across the membrane. This Listeria welshimeri serovar 6b (strain ATCC 35897 / DSM 20650 / CCUG 15529 / CIP 8149 / NCTC 11857 / SLCC 5334 / V8) protein is Protein translocase subunit SecA 2.